The primary structure comprises 66 residues: Large ribosomal subunit protein bL35 (66 aa).

Belongs to the bacterial ribosomal protein bL35 family.

This chain is Large ribosomal subunit protein bL35, found in Bradyrhizobium diazoefficiens (strain JCM 10833 / BCRC 13528 / IAM 13628 / NBRC 14792 / USDA 110).